The following is a 280-amino-acid chain: Urease accessory protein UreD 3 (280 aa).

The protein belongs to the UreD family. As to quaternary structure, ureD, UreF and UreG form a complex that acts as a GTP-hydrolysis-dependent molecular chaperone, activating the urease apoprotein by helping to assemble the nickel containing metallocenter of UreC. The UreE protein probably delivers the nickel.

Its subcellular location is the cytoplasm. In terms of biological role, required for maturation of urease via the functional incorporation of the urease nickel metallocenter. This is Urease accessory protein UreD 3 from Bradyrhizobium sp. (strain ORS 278).